Consider the following 127-residue polypeptide: Large ribosomal subunit protein bL12 (127 aa).

This sequence belongs to the bacterial ribosomal protein bL12 family. As to quaternary structure, homodimer. Part of the ribosomal stalk of the 50S ribosomal subunit. Forms a multimeric L10(L12)X complex, where L10 forms an elongated spine to which 2 to 4 L12 dimers bind in a sequential fashion. Binds GTP-bound translation factors.

In terms of biological role, forms part of the ribosomal stalk which helps the ribosome interact with GTP-bound translation factors. Is thus essential for accurate translation. This Carboxydothermus hydrogenoformans (strain ATCC BAA-161 / DSM 6008 / Z-2901) protein is Large ribosomal subunit protein bL12.